The sequence spans 637 residues: Sodium-dependent phosphate transport protein 2A (637 aa).

Topologically, residues 1-103 (MMSYSERLGG…LAQVGTKLLK (103 aa)) are cytoplasmic. S14 and S34 each carry phosphoserine. Residues 104-125 (VPLMLAFLYLFVCSLDVLSSAF) form a helical membrane-spanning segment. Residues 126–145 (QLAGGKVAGDIFKDNAILSN) lie on the Extracellular side of the membrane. A helical transmembrane segment spans residues 146–163 (PVAGLVVGILVTVLVQSS). Over 164-165 (ST) the chain is Cytoplasmic. Residues 166 to 185 (STSIIVSMVSSGLLEVSSAI) traverse the membrane as a helical segment. The Extracellular segment spans residues 186 to 345 (PIIMGSNIGT…HIFVDTGLPD (160 aa)). Disulfide bonds link C225–C520 and C306–C334. Residues N298 and N328 are each glycosylated (N-linked (GlcNAc...) asparagine). A helical membrane pass occupies residues 346 to 368 (LAVGLILLAGSLVVLCTCLILLV). The Cytoplasmic portion of the chain corresponds to 369 to 410 (KMLNSLLKGQVMSSRRSSTQTDFPAPFTWVTGYFAMVVGASM). The chain crosses the membrane as a helical span at residues 411–434 (TFVVQSSSVFTSAITPLIGLGVIS). At 435-464 (IERAYPLTLGSNIGTTTTAILAALASPREK) the chain is on the extracellular side. A helical membrane pass occupies residues 465-485 (LSSSFQIALCHFFFNISGILL). Residues 486-511 (WYPLPCTRLPIRMAKALGKRTAKYRW) lie on the Cytoplasmic side of the membrane. T506 is modified (phosphothreonine; by PKC). The chain crosses the membrane as a helical span at residues 512-532 (FAVLYLLVCFLLLPSLVFGIS). Over 533 to 537 (MAGWQ) the chain is Extracellular. Residues 538–559 (AMVGVGTPFGALLAFVVLVNVL) traverse the membrane as a helical segment. Over 560–637 (QSRSPGHLPK…LPAHHNATRL (78 aa)) the chain is Cytoplasmic. Residue S605 is modified to Phosphoserine. T621 is subject to Phosphothreonine. Residue S623 is modified to Phosphoserine.

This sequence belongs to the SLC34A transporter family. As to quaternary structure, interacts via its C-terminal region with NHERF4. Interacts with NHERF1. Interacts with TMEM174; regulates SLC34A1 internalization by PTH and FGF23. Kidney.

Its subcellular location is the apical cell membrane. The protein resides in the cell membrane. The enzyme catalyses 3 Na(+)(out) + phosphate(out) = 3 Na(+)(in) + phosphate(in). Functionally, involved in actively transporting phosphate into cells via Na(+) cotransport in the renal brush border membrane. The cotransport has a Na(+):Pi stoichiometry of 3:1 and is electrogenic. The chain is Sodium-dependent phosphate transport protein 2A from Mus musculus (Mouse).